The chain runs to 454 residues: Response regulator PleD (454 aa).

Response regulatory domains lie at 4–120 and 155–269; these read RILV…RSLT and RVLI…KTQI. Asp9, Asp10, Asp53, and Met55 together coordinate Mg(2+). A 4-aspartylphosphate modification is found at Asp53. Positions 319-454 constitute a GGDEF domain; sequence DPVSALLIDI…GRNAVVGKAA (136 aa). 2 residues coordinate substrate: Asn335 and Asp344. The active-site Proton acceptor is Glu370.

Homodimer. Inactive monomer in solution. In terms of processing, phosphorylated by PleC and DivJ. Phosphorylation stimulates cyclase activity.

The protein resides in the cytoplasm. It carries out the reaction 2 GTP = 3',3'-c-di-GMP + 2 diphosphate. The protein operates within purine metabolism; 3',5'-cyclic di-GMP biosynthesis. Its activity is regulated as follows. Allosterically inhibited by the product c-di-GMP. Its function is as follows. Response regulator that is part of a signal transduction pathway controlling cell differentiation in the swarmer-to-stalked cell transition. In terms of biological role, catalyzes the condensation of two GTP molecules to the cyclic dinucleotide di-GMP (c-di-GMP), which acts as a secondary messenger. The polypeptide is Response regulator PleD (pleD) (Caulobacter vibrioides (strain ATCC 19089 / CIP 103742 / CB 15) (Caulobacter crescentus)).